A 107-amino-acid chain; its full sequence is UPF0145 protein ECA2666 (107 aa).

The protein belongs to the UPF0145 family.

This is UPF0145 protein ECA2666 from Pectobacterium atrosepticum (strain SCRI 1043 / ATCC BAA-672) (Erwinia carotovora subsp. atroseptica).